The primary structure comprises 86 residues: Small ribosomal subunit protein bS18c (86 aa).

This sequence belongs to the bacterial ribosomal protein bS18 family. Part of the 30S ribosomal subunit.

Its subcellular location is the plastid. The protein resides in the chloroplast. The polypeptide is Small ribosomal subunit protein bS18c (Pseudotsuga menziesii (Douglas-fir)).